Reading from the N-terminus, the 138-residue chain is MSMKYLMLLFAAMIIRSFADSGNAIETTLPEITNATTDIPAIRLCGPEGDGYCLHGDCIHARDIDGMYCRCSHGYTGIRCQHVVLVDYQRSEKPNTTTSYIPSPGIVLVLVGIIMCCLLSVYRFTRRTKLPIQDMVVP.

The first 19 residues, 1–19, serve as a signal peptide directing secretion; it reads MSMKYLMLLFAAMIIRSFA. N34 carries N-linked (GlcNAc...) asparagine; by host glycosylation. The EGF-like domain occupies 41-81; the sequence is AIRLCGPEGDGYCLHGDCIHARDIDGMYCRCSHGYTGIRCQ. Disulfide bonds link C45–C58, C53–C69, and C71–C80. N95 carries N-linked (GlcNAc...) asparagine; by host glycosylation.

This sequence belongs to the orthopoxvirus OPG019 family.

The protein localises to the secreted. Stimulates cellular proliferation (hyperplasia)and mobility around infected cells to promote rapid and efficient spread of infection. This Rabbitpox virus (strain Utrecht) (RPV) protein is Growth factor (OPG019).